Consider the following 372-residue polypeptide: Histidinol-phosphate aminotransferase (372 aa).

N6-(pyridoxal phosphate)lysine is present on Lys-234.

It belongs to the class-II pyridoxal-phosphate-dependent aminotransferase family. Histidinol-phosphate aminotransferase subfamily. Homodimer. Requires pyridoxal 5'-phosphate as cofactor.

The catalysed reaction is L-histidinol phosphate + 2-oxoglutarate = 3-(imidazol-4-yl)-2-oxopropyl phosphate + L-glutamate. Its pathway is amino-acid biosynthesis; L-histidine biosynthesis; L-histidine from 5-phospho-alpha-D-ribose 1-diphosphate: step 7/9. This chain is Histidinol-phosphate aminotransferase (hisC), found in Corynebacterium efficiens (strain DSM 44549 / YS-314 / AJ 12310 / JCM 11189 / NBRC 100395).